We begin with the raw amino-acid sequence, 154 residues long: Probable chemoreceptor glutamine deamidase CheD (154 aa).

Belongs to the CheD family.

The catalysed reaction is L-glutaminyl-[protein] + H2O = L-glutamyl-[protein] + NH4(+). In terms of biological role, probably deamidates glutamine residues to glutamate on methyl-accepting chemotaxis receptors (MCPs), playing an important role in chemotaxis. In Methanococcus maripaludis (strain C5 / ATCC BAA-1333), this protein is Probable chemoreceptor glutamine deamidase CheD.